The sequence spans 439 residues: 26S proteasome regulatory subunit 6A (439 aa).

M1 carries the N-acetylmethionine modification. Position 9 is a phosphoserine (S9). 227–234 (GPPGTGKT) serves as a coordination point for ATP. S376 is modified (phosphoserine).

It belongs to the AAA ATPase family. As to quaternary structure, component of the 19S proteasome regulatory particle complex. The 26S proteasome consists of a 20S core particle (CP) and two 19S regulatory subunits (RP). The regulatory particle is made of a lid composed of 9 subunits, a base containing 6 ATPases including PSMC3 and few additional components. Interacts with PAAF1.

The protein localises to the cytoplasm. The protein resides in the nucleus. Functionally, component of the 26S proteasome, a multiprotein complex involved in the ATP-dependent degradation of ubiquitinated proteins. This complex plays a key role in the maintenance of protein homeostasis by removing misfolded or damaged proteins, which could impair cellular functions, and by removing proteins whose functions are no longer required. Therefore, the proteasome participates in numerous cellular processes, including cell cycle progression, apoptosis, or DNA damage repair. PSMC3 belongs to the heterohexameric ring of AAA (ATPases associated with diverse cellular activities) proteins that unfolds ubiquitinated target proteins that are concurrently translocated into a proteolytic chamber and degraded into peptides. This is 26S proteasome regulatory subunit 6A (Psmc3) from Rattus norvegicus (Rat).